The primary structure comprises 518 residues: Prosaposin (518 aa).

An N-terminal signal peptide occupies residues 1–17; the sequence is MARRLLTLLGLLAAAVA. Residues 18-60 constitute a propeptide that is removed on maturation; the sequence is SPVLWQKDCAKGPEVWCQSLRTASQCGAVKHCQQNVWSKPAVN. Residues 19-59 enclose the Saposin A-type 1 domain; it reads PVLWQKDCAKGPEVWCQSLRTASQCGAVKHCQQNVWSKPAV. 4 consecutive Saposin B-type domains span residues 60–143, 193–277, 307–388, and 399–480; these read NSIP…QSLQ, TEDV…PSVK, TFSV…AANK, and AGGF…GAAK. 3 disulfide bridges follow: C64–C139, C67–C133, and C95–C107. N81 carries N-linked (GlcNAc...) asparagine glycosylation. Residues 144–193 constitute a propeptide that is removed on maturation; the sequence is KHLAAMKLQKQLQSNKIPELDFSELTSPFMANVPLLLYPQDKPKQKSKAT. 3 disulfides stabilise this stretch: C197–C273, C200–C267, and C229–C240. The N-linked (GlcNAc...) asparagine glycan is linked to N214. Residues 277 to 306 constitute a propeptide that is removed on maturation; the sequence is KSVPLQTLVPAQVVHEVKMETVEKATVQEK. 3 disulfides stabilise this stretch: C311–C384, C314–C378, and C342–C353. N328 carries an N-linked (GlcNAc...) asparagine glycan. The propeptide occupies 388–398; sequence KPPQQPVVVKP. Intrachain disulfides connect C403-C476, C406-C470, and C434-C445. N-linked (GlcNAc...) asparagine glycosylation is present at N420. The propeptide occupies 480-518; sequence KKPLLGEDACVWGPGYWCKNMETAAQCNAVDHCRRHVWN. Positions 482–518 constitute a Saposin A-type 2 domain; sequence PLLGEDACVWGPGYWCKNMETAAQCNAVDHCRRHVWN.

In terms of assembly, saposin-B is a homodimer. Post-translationally, this precursor is proteolytically processed to 4 small peptides, which are similar to each other and are sphingolipid hydrolase activator proteins.

The protein resides in the lysosome. It is found in the secreted. The lysosomal degradation of sphingolipids takes place by the sequential action of specific hydrolases. Some of these enzymes require specific low-molecular mass, non-enzymatic proteins: the sphingolipids activator proteins (coproteins). Functionally, saposin-A and saposin-C stimulate the hydrolysis of glucosylceramide by beta-glucosylceramidase (EC 3.2.1.45) and galactosylceramide by beta-galactosylceramidase (EC 3.2.1.46). Saposin-C apparently acts by combining with the enzyme and acidic lipid to form an activated complex, rather than by solubilizing the substrate. Its function is as follows. Saposin-B stimulates the hydrolysis of galacto-cerebroside sulfate by arylsulfatase A (EC 3.1.6.8), GM1 gangliosides by beta-galactosidase (EC 3.2.1.23) and globotriaosylceramide by alpha-galactosidase A (EC 3.2.1.22). Saposin-B forms a solubilizing complex with the substrates of the sphingolipid hydrolases. In terms of biological role, saposin-D is a specific sphingomyelin phosphodiesterase activator (EC 3.1.4.12). In Gallus gallus (Chicken), this protein is Prosaposin (PSAP).